The sequence spans 126 residues: Fluoride-specific ion channel FluC (126 aa).

The next 4 membrane-spanning stretches (helical) occupy residues 1-21 (MTAT…RFHA), 33-53 (AVFP…MGVL), 72-92 (VGVL…ALLV), and 97-117 (IGLA…GLFL). G76 and T79 together coordinate Na(+).

The protein belongs to the fluoride channel Fluc/FEX (TC 1.A.43) family.

Its subcellular location is the cell inner membrane. The enzyme catalyses fluoride(in) = fluoride(out). With respect to regulation, na(+) is not transported, but it plays an essential structural role and its presence is essential for fluoride channel function. In terms of biological role, fluoride-specific ion channel. Important for reducing fluoride concentration in the cell, thus reducing its toxicity. The sequence is that of Fluoride-specific ion channel FluC from Novosphingobium aromaticivorans (strain ATCC 700278 / DSM 12444 / CCUG 56034 / CIP 105152 / NBRC 16084 / F199).